Reading from the N-terminus, the 352-residue chain is tRNA-specific 2-thiouridylase MnmA (352 aa).

Residue 6–13 (AVSGGTDS) coordinates ATP. The active-site Nucleophile is the cysteine 92. An intrachain disulfide couples cysteine 92 to cysteine 189. Residue glycine 116 coordinates ATP. Residues 139-141 (KDQ) are interaction with tRNA. Catalysis depends on cysteine 189, which acts as the Cysteine persulfide intermediate. The tract at residues 294–295 (RY) is interaction with tRNA.

Belongs to the MnmA/TRMU family.

The protein localises to the cytoplasm. The enzyme catalyses S-sulfanyl-L-cysteinyl-[protein] + uridine(34) in tRNA + AH2 + ATP = 2-thiouridine(34) in tRNA + L-cysteinyl-[protein] + A + AMP + diphosphate + H(+). Catalyzes the 2-thiolation of uridine at the wobble position (U34) of tRNA, leading to the formation of s(2)U34. In Lawsonia intracellularis (strain PHE/MN1-00), this protein is tRNA-specific 2-thiouridylase MnmA.